We begin with the raw amino-acid sequence, 749 residues long: Protein SWAP (749 aa).

Residues S8–F124 form a dry CEEERYL region. The span at E105 to Q118 shows a compositional bias: basic and acidic residues. Positions E105–I149 are disordered. An SURP motif 1 repeat occupies I166 to Y209. The segment at H256–V310 is disordered. Residues I391 to Y431 form an SURP motif 2 repeat. Over residues P458–S478 the composition is skewed to low complexity. 3 disordered regions span residues P458–L498, L537–R592, and K608–R749. Residues R538–P552 show a composition bias toward basic and acidic residues. Positions P560–D569 are enriched in polar residues. Residues F574 to P583 show a composition bias toward pro residues. Composition is skewed to basic and acidic residues over residues K608–D659 and E679–E689. Basic residues-rich tracts occupy residues R690 to R704 and E714 to R749.

Functionally, it is a regulator of pre-mRNA splicing (and, possibly, of other RNA processing events). It may regulate its own expression at the level of RNA processing. The sequence is that of Protein SWAP (swp-1) from Caenorhabditis elegans.